Here is a 206-residue protein sequence, read N- to C-terminus: Small ribosomal subunit protein uS3 (206 aa).

In terms of domain architecture, KH type-2 spans 39–107 (IRSYINESFK…SVEVNVVGIK (69 aa)).

The protein belongs to the universal ribosomal protein uS3 family. As to quaternary structure, part of the 30S ribosomal subunit. Forms a tight complex with proteins S10 and S14.

Functionally, binds the lower part of the 30S subunit head. Binds mRNA in the 70S ribosome, positioning it for translation. The polypeptide is Small ribosomal subunit protein uS3 (Wolbachia sp. subsp. Brugia malayi (strain TRS)).